A 78-amino-acid polypeptide reads, in one-letter code: Large ribosomal subunit protein bL28 (78 aa).

A disordered region spans residues 1–23 (MSRVCQVTGKKPMVGNNRSHAKN).

The protein belongs to the bacterial ribosomal protein bL28 family.

The protein is Large ribosomal subunit protein bL28 of Shewanella sediminis (strain HAW-EB3).